The following is a 171-amino-acid chain: Protein hunchback (171 aa).

Disordered stretches follow at residues 14–93 (PMSH…PMQI) and 124–171 (SNDK…KYMA). The span at 17-31 (HHHHHSHHSHGHHHS) shows a compositional bias: basic residues. Composition is skewed to low complexity over residues 32–42 (NSNSNASSPRQ) and 52–80 (SSSN…DTPL). A compositionally biased stretch (basic and acidic residues) spans 152–171 (EPEKDHDLMSNSSEDMKYMA).

Belongs to the hunchback C2H2-type zinc-finger protein family.

Its subcellular location is the nucleus. Gap class segmentation protein that controls development of head structures. The polypeptide is Protein hunchback (hb) (Scaptomyza albovittata (Fruit fly)).